The chain runs to 186 residues: Elongation factor P (186 aa).

The protein belongs to the elongation factor P family.

It is found in the cytoplasm. Its pathway is protein biosynthesis; polypeptide chain elongation. Functionally, involved in peptide bond synthesis. Stimulates efficient translation and peptide-bond synthesis on native or reconstituted 70S ribosomes in vitro. Probably functions indirectly by altering the affinity of the ribosome for aminoacyl-tRNA, thus increasing their reactivity as acceptors for peptidyl transferase. The sequence is that of Elongation factor P from Mycoplasmopsis synoviae (strain 53) (Mycoplasma synoviae).